A 331-amino-acid polypeptide reads, in one-letter code: Ribosomal RNA small subunit methyltransferase H (331 aa).

S-adenosyl-L-methionine-binding positions include 39 to 41 (GGY), D56, F83, D100, and Q107.

The protein belongs to the methyltransferase superfamily. RsmH family.

It is found in the cytoplasm. The enzyme catalyses cytidine(1402) in 16S rRNA + S-adenosyl-L-methionine = N(4)-methylcytidine(1402) in 16S rRNA + S-adenosyl-L-homocysteine + H(+). Its function is as follows. Specifically methylates the N4 position of cytidine in position 1402 (C1402) of 16S rRNA. The sequence is that of Ribosomal RNA small subunit methyltransferase H from Bartonella bacilliformis (strain ATCC 35685 / KC583 / Herrer 020/F12,63).